A 515-amino-acid chain; its full sequence is Envelope glycoprotein (515 aa).

The signal sequence occupies residues M1–T33. Topologically, residues W34–T435 are extracellular. N-linked (GlcNAc...) asparagine; by host glycosylation is found at N129 and N203. Residues C212–C215 carry the CXXC motif. 3 disulfides stabilise this stretch: C212/C215, C212/C392, and C384/C391. 5 N-linked (GlcNAc...) asparagine; by host glycosylation sites follow: N230, N251, N256, N271, and N287. Residues V304–V324 are fusion peptide. 2 coiled-coil regions span residues Q330 to I376 and N388 to W420. The N-linked (GlcNAc...) asparagine; by host glycan is linked to N351. An immunosuppression region spans residues A365–Q381. Positions C384–C392 match the CX6CC motif. N-linked (GlcNAc...) asparagine; by host glycosylation is present at N398. A helical transmembrane segment spans residues I436 to L456. The S-palmitoyl cysteine; by host moiety is linked to residue C455. Residues I457–P515 lie on the Cytoplasmic side of the membrane.

The mature envelope protein (Env) consists of a trimer of SU-TM heterodimers attached by a labile interchain disulfide bond. Specific enzymatic cleavages in vivo yield mature proteins. Envelope glycoproteins are synthesized as an inactive precursor that is N-glycosylated and processed likely by host cell furin or by a furin-like protease in the Golgi to yield the mature SU and TM proteins. The cleavage site between SU and TM requires the minimal sequence [KR]-X-[KR]-R. Post-translationally, the CXXC motif is highly conserved across a broad range of retroviral envelope proteins. It is thought to participate in the formation of a labile disulfide bond possibly with the CX6CC motif present in the transmembrane protein. Isomerization of the intersubunit disulfide bond to an SU intrachain disulfide bond is thought to occur upon receptor recognition in order to allow membrane fusion. In terms of processing, the transmembrane protein is palmitoylated.

Its subcellular location is the virion membrane. The protein localises to the host cell membrane. The surface protein (SU) attaches the virus to the host cell by binding to its receptor. This interaction triggers the refolding of the transmembrane protein (TM) and is thought to activate its fusogenic potential by unmasking its fusion peptide. Fusion occurs at the host cell plasma membrane. In terms of biological role, the transmembrane protein (TM) acts as a class I viral fusion protein. Under the current model, the protein has at least 3 conformational states: pre-fusion native state, pre-hairpin intermediate state, and post-fusion hairpin state. During viral and target cell membrane fusion, the coiled coil regions (heptad repeats) assume a trimer-of-hairpins structure, positioning the fusion peptide in close proximity to the C-terminal region of the ectodomain. The formation of this structure appears to drive apposition and subsequent fusion of viral and target cell membranes. Membranes fusion leads to delivery of the nucleocapsid into the cytoplasm. The chain is Envelope glycoprotein (env) from Bovine leukemia virus (isolate Australian) (BLV).